The primary structure comprises 299 residues: Glycine--tRNA ligase alpha subunit (299 aa).

Belongs to the class-II aminoacyl-tRNA synthetase family. In terms of assembly, tetramer of two alpha and two beta subunits.

It is found in the cytoplasm. It catalyses the reaction tRNA(Gly) + glycine + ATP = glycyl-tRNA(Gly) + AMP + diphosphate. This is Glycine--tRNA ligase alpha subunit (glyQ) from Synechocystis sp. (strain ATCC 27184 / PCC 6803 / Kazusa).